Consider the following 141-residue polypeptide: MAQYLSTLLLLLATLAVALAWSPKEEDRIIPGGIYNADLNDEWVQRALHFAISEYNKATKDDYYRRPLRVLRARQQTVGGVNYFFDVEVGRTICTKSQPNLDTCAFHEQPELQKKQLCSFEIYEVPWENRRSLVKSRCQES.

The N-terminal stretch at 1 to 20 is a signal peptide; the sequence is MAQYLSTLLLLLATLAVALA. The short motif at 76 to 80 is the Secondary area of contact element; sequence QTVGG. 2 disulfides stabilise this stretch: C94–C104 and C118–C138.

The protein belongs to the cystatin family. Expressed in submandibular and sublingual saliva but not in parotid saliva (at protein level). Expressed in saliva, tears, urine and seminal fluid.

The protein localises to the secreted. Its function is as follows. Human saliva appears to contain several cysteine proteinase inhibitors that are immunologically related to cystatin S but that differ in their specificity due to amino acid sequence differences. Cystatin SN, with a pI of 7.5, is a much better inhibitor of papain and dipeptidyl peptidase I than is cystatin S, although both inhibit ficin equally well. The sequence is that of Cystatin-SN (CST1) from Homo sapiens (Human).